The sequence spans 339 residues: tRNA N6-adenosine threonylcarbamoyltransferase (339 aa).

Fe cation-binding residues include histidine 114 and histidine 118. Substrate is bound by residues 137 to 141 (VVSGG), aspartate 170, glycine 183, aspartate 187, and asparagine 277. Position 305 (aspartate 305) interacts with Fe cation.

The protein belongs to the KAE1 / TsaD family. Fe(2+) serves as cofactor.

The protein resides in the cytoplasm. It carries out the reaction L-threonylcarbamoyladenylate + adenosine(37) in tRNA = N(6)-L-threonylcarbamoyladenosine(37) in tRNA + AMP + H(+). Functionally, required for the formation of a threonylcarbamoyl group on adenosine at position 37 (t(6)A37) in tRNAs that read codons beginning with adenine. Is involved in the transfer of the threonylcarbamoyl moiety of threonylcarbamoyl-AMP (TC-AMP) to the N6 group of A37, together with TsaE and TsaB. TsaD likely plays a direct catalytic role in this reaction. This chain is tRNA N6-adenosine threonylcarbamoyltransferase, found in Clostridium perfringens (strain ATCC 13124 / DSM 756 / JCM 1290 / NCIMB 6125 / NCTC 8237 / Type A).